The chain runs to 471 residues: Serine/threonine-protein kinase AtPK2/AtPK19 (471 aa).

Residues 1-21 (MVSSQCSVANKNQTGKPFQKH) form a disordered region. The Protein kinase domain occupies 140-395 (FEVLKVVGQG…AEEIKKHKWF (256 aa)). Residues 146–154 (VGQGAFGKV) and Lys-169 contribute to the ATP site. Asp-263 serves as the catalytic Proton acceptor. Residues 281 to 307 (DFGLAKEFEENTRSNSMCGTTEYMAPE) form an activation loop region. Phosphoserine; by PDPK1 is present on Ser-296. Residues 396 to 466 (KAINWKKLEA…VRPPHSFLHR (71 aa)) form the AGC-kinase C-terminal domain. The residue at position 455 (Thr-455) is a Phosphothreonine; by TOR.

It belongs to the protein kinase superfamily. AGC Ser/Thr protein kinase family. S6 kinase subfamily. In terms of assembly, interacts with TAP46. Binds to MRF1. Undergoes serine-specific autophosphorylation. Phosphorylated at Thr-455 by TOR.

The enzyme catalyses L-seryl-[protein] + ATP = O-phospho-L-seryl-[protein] + ADP + H(+). It carries out the reaction L-threonyl-[protein] + ATP = O-phospho-L-threonyl-[protein] + ADP + H(+). Activated by PDK1. Functionally, downstream effector of TOR signaling pathway. May be involved in adaptation of plant to cold or high-salt conditions. Mediates the phosphorylation of MRFs (e.g. MRF1). The polypeptide is Serine/threonine-protein kinase AtPK2/AtPK19 (ATPK2) (Arabidopsis thaliana (Mouse-ear cress)).